The primary structure comprises 520 residues: Membrane-bound glycerophospholipid O-acyltransferase 2 (520 aa).

6 consecutive transmembrane segments (helical) span residues 22 to 42 (PIDQVNFVVCQLFALLAAIWF), 61 to 81 (TLLGLYLALFCFGWYALHFLV), 88 to 108 (CIMIIIGVENMHNYCFVFALG), 184 to 204 (FMGILAGPLCSYKDYITFIEG), 237 to 257 (LLVCGLSLLFHLTICTTLPVE), and 264 to 284 (FQATASWPTKIIYLYISLLAA). Residues N342 and H373 contribute to the active site. A run of 3 helical transmembrane segments spans residues 366–386 (FILSAIWHGVYPGYYLTFLTG), 416–436 (VITWIVTQVAISYTVVPFVLL), and 444–464 (FYSSWYYCLHILGILVLLLLP).

This sequence belongs to the membrane-bound acyltransferase family. Expressed in neutrophils.

It is found in the endoplasmic reticulum membrane. It carries out the reaction a 1-acyl-sn-glycero-3-phosphocholine + an acyl-CoA = a 1,2-diacyl-sn-glycero-3-phosphocholine + CoA. The enzyme catalyses a 1-acyl-sn-glycero-3-phosphoethanolamine + an acyl-CoA = a 1,2-diacyl-sn-glycero-3-phosphoethanolamine + CoA. The catalysed reaction is a 1-acyl-sn-glycero-3-phosphate + an acyl-CoA = a 1,2-diacyl-sn-glycero-3-phosphate + CoA. It catalyses the reaction (9Z)-hexadecenoyl-CoA + 1-hexadecanoyl-sn-glycero-3-phosphocholine = 1-hexadecanoyl-2-(9Z-hexadecenoyl)-sn-glycero-3-phosphocholine + CoA. It carries out the reaction 1-hexadecanoyl-sn-glycero-3-phosphoethanolamine + (9Z)-octadecenoyl-CoA = 1-hexadecanoyl-2-(9Z-octadecenoyl)-sn-glycero-3-phosphoethanolamine + CoA. The enzyme catalyses 1-hexadecanoyl-sn-glycero-3-phosphoethanolamine + (9Z)-hexadecenoyl-CoA = 1-hexadecanoyl-2-(9Z)-hexadecenoyl-sn-glycero-3-phosphoethanolamine + CoA. The catalysed reaction is 1-(9Z-octadecenoyl)-sn-glycero-3-phospho-L-serine + hexadecanoyl-CoA = 1-(9Z)-octadecenoyl-2-hexadecanoyl-sn-glycero-3-phosphoserine + CoA. It catalyses the reaction (9Z,12Z)-octadecadienoyl-CoA + 1-hexadecanoyl-sn-glycero-3-phosphocholine = 1-hexadecanoyl-2-(9Z,12Z-octadecadienoyl)-sn-glycero-3-phosphocholine + CoA. It carries out the reaction 1-hexadecanoyl-sn-glycero-3-phosphocholine + (9Z)-octadecenoyl-CoA = 1-hexadecanoyl-2-(9Z-octadecenoyl)-sn-glycero-3-phosphocholine + CoA. The enzyme catalyses 1-hexadecanoyl-sn-glycero-3-phosphate + (9Z)-hexadecenoyl-CoA = 1-hexadecanoyl-2-[(9Z)-hexadec-9-enoyl]-sn-glycero-3-phosphate + CoA. The catalysed reaction is 1-hexadecanoyl-sn-glycero-3-phosphate + (9Z)-octadecenoyl-CoA = 1-hexadecanoyl-2-(9Z-octadecenoyl)-sn-glycero-3-phosphate + CoA. It catalyses the reaction a 1-O-(1Z-alkenyl)-sn-glycero-3-phosphocholine + (9Z)-octadecenoyl-CoA = 1-O-(1Z)-alkenyl-2-(9Z)-octadecenoyl-sn-glycero-3-phosphocholine + CoA. It carries out the reaction a 1-O-(1Z-alkenyl)-sn-glycero-3-phosphoethanolamine + (9Z)-octadecenoyl-CoA = 1-O-(1Z)-alkenyl-2-(9Z)-octadecenoyl-sn-glycero-3-phosphoethanolamine + CoA. The enzyme catalyses 1-octadecanoyl-sn-glycero-3-phosphoethanolamine + (9Z)-octadecenoyl-CoA = 1-octadecanoyl-2-(9Z-octadecenoyl)-sn-glycero-3-phosphoethanolamine + CoA. The catalysed reaction is 1-octadecanoyl-sn-glycero-3-phosphocholine + (9Z)-octadecenoyl-CoA = 1-octadecanoyl-2-(9Z-octadecenoyl)-sn-glycero-3-phosphocholine + CoA. It catalyses the reaction 1-(9Z-octadecenoyl)-sn-glycero-3-phosphoethanolamine + (9Z)-octadecenoyl-CoA = 1,2-di-(9Z-octadecenoyl)-sn-glycero-3-phosphoethanolamine + CoA. The protein operates within lipid metabolism; phospholipid metabolism. Its activity is regulated as follows. Partially inhibited by thimerosal. In terms of biological role, acyltransferase which catalyzes the transfer of an acyl group from an acyl-CoA to a lysophospholipid leading to the production of a phospholipid and participates in the reacylation step of the phospholipid remodeling pathway also known as the Lands cycle. Catalyzes preferentially the acylation of lysophosphatidylethanolamine (1-acyl-sn-glycero-3-phosphoethanolamine or LPE) and lysophosphatidic acid (LPA) and to a lesser extend lysophosphatidylcholine (LPC) and lysophosphatidylserine (LPS). Prefers oleoyl-CoA as the acyl donor. May be involved in chondrocyte differentiation. This chain is Membrane-bound glycerophospholipid O-acyltransferase 2, found in Homo sapiens (Human).